The sequence spans 440 residues: Transposon Ty1-NL1 Gag polyprotein (440 aa).

Composition is skewed to polar residues over residues 1–23, 48–60, 71–86, and 131–152; these read MESQQLSQHSPISHGSACASVTS, TKANSQQTTTPAS, SPQTAQSHSPQNGPYQ, and PQYPSSVGTPLSTPSPESGNTF. Disordered stretches follow at residues 1–86, 131–171, and 350–425; these read MESQ…GPYQ, PQYP…YVRP, and QQES…TEPI. Positions 153–165 are enriched in low complexity; it reads TDSSSADSDMTST. The tract at residues 299-401 is RNA-binding; the sequence is NNGIPINNKV…NSQSRTARAH (103 aa). Basic and acidic residues predominate over residues 363–372; the sequence is NPSDEKKDSR. The span at 373 to 412 shows a compositional bias: polar residues; that stretch reads TYTNTTKPKSITRNSQKPNNSQSRTARAHNVSTSNNSSGP.

Homotrimer.

The protein resides in the cytoplasm. Functionally, capsid protein (CA) is the structural component of the virus-like particle (VLP), forming the shell that encapsulates the retrotransposons dimeric RNA genome. The particles are assembled from trimer-clustered units and there are holes in the capsid shells that allow for the diffusion of macromolecules. CA also has nucleocapsid-like chaperone activity, promoting primer tRNA(i)-Met annealing to the multipartite primer-binding site (PBS), dimerization of Ty1 RNA and initiation of reverse transcription. In Saccharomyces cerevisiae (strain ATCC 204508 / S288c) (Baker's yeast), this protein is Transposon Ty1-NL1 Gag polyprotein (TY1A-NL1).